The following is a 677-amino-acid chain: Methionine--tRNA ligase (677 aa).

The 'HIGH' region motif lies at 15–25 (PYANGSIHLGH). Zn(2+)-binding residues include C146, C149, C159, and C162. A 'KMSKS' region motif is present at residues 333-337 (KMSKS). An ATP-binding site is contributed by K336. Residues 575–677 (DFAKIDLRVA…DGAKPGQQVK (103 aa)) form the tRNA-binding domain.

The protein belongs to the class-I aminoacyl-tRNA synthetase family. MetG type 1 subfamily. Homodimer. Requires Zn(2+) as cofactor.

The protein localises to the cytoplasm. The catalysed reaction is tRNA(Met) + L-methionine + ATP = L-methionyl-tRNA(Met) + AMP + diphosphate. Its function is as follows. Is required not only for elongation of protein synthesis but also for the initiation of all mRNA translation through initiator tRNA(fMet) aminoacylation. This is Methionine--tRNA ligase from Salmonella paratyphi C (strain RKS4594).